The sequence spans 1011 residues: Ankyrin repeat domain-containing protein 18B (1011 aa).

ANK repeat units lie at residues Lys67–Ile96, Leu100–Ile129, Tyr133–Ala162, Glu166–Ala195, and Phe199–Ser228. Disordered regions lie at residues Leu264–Lys330 and Met533–Arg554. Coiled coils occupy residues Glu277–Gln319, Asn385–Asp639, Ile692–Met722, and Phe752–Ala908. Residues Lys280–Glu293 show a composition bias toward basic residues. The segment covering Gly294 to Gln319 has biased composition (basic and acidic residues).

This Homo sapiens (Human) protein is Ankyrin repeat domain-containing protein 18B (ANKRD18B).